We begin with the raw amino-acid sequence, 375 residues long: Queuine tRNA-ribosyltransferase (375 aa).

Aspartate 89 functions as the Proton acceptor in the catalytic mechanism. Substrate-binding positions include 89 to 93 (DSGGF), aspartate 143, glutamine 187, and glycine 214. The RNA binding stretch occupies residues 245 to 251 (GVGKPED). Aspartate 264 (nucleophile) is an active-site residue. An RNA binding; important for wobble base 34 recognition region spans residues 269–273 (TRNAR). Zn(2+) is bound by residues cysteine 302, cysteine 304, cysteine 307, and histidine 333.

This sequence belongs to the queuine tRNA-ribosyltransferase family. Homodimer. Within each dimer, one monomer is responsible for RNA recognition and catalysis, while the other monomer binds to the replacement base PreQ1. The cofactor is Zn(2+).

The catalysed reaction is 7-aminomethyl-7-carbaguanine + guanosine(34) in tRNA = 7-aminomethyl-7-carbaguanosine(34) in tRNA + guanine. It functions in the pathway tRNA modification; tRNA-queuosine biosynthesis. Functionally, catalyzes the base-exchange of a guanine (G) residue with the queuine precursor 7-aminomethyl-7-deazaguanine (PreQ1) at position 34 (anticodon wobble position) in tRNAs with GU(N) anticodons (tRNA-Asp, -Asn, -His and -Tyr). Catalysis occurs through a double-displacement mechanism. The nucleophile active site attacks the C1' of nucleotide 34 to detach the guanine base from the RNA, forming a covalent enzyme-RNA intermediate. The proton acceptor active site deprotonates the incoming PreQ1, allowing a nucleophilic attack on the C1' of the ribose to form the product. After dissociation, two additional enzymatic reactions on the tRNA convert PreQ1 to queuine (Q), resulting in the hypermodified nucleoside queuosine (7-(((4,5-cis-dihydroxy-2-cyclopenten-1-yl)amino)methyl)-7-deazaguanosine). The sequence is that of Queuine tRNA-ribosyltransferase from Salmonella enteritidis PT4 (strain P125109).